The following is a 200-amino-acid chain: Holliday junction branch migration complex subunit RuvA (200 aa).

The interval methionine 1–isoleucine 64 is domain I. Residues aspartate 65–alanine 143 form a domain II region. Residues proline 144 to glutamine 149 are flexible linker. The segment at valine 150–lysine 200 is domain III.

Belongs to the RuvA family. As to quaternary structure, homotetramer. Forms an RuvA(8)-RuvB(12)-Holliday junction (HJ) complex. HJ DNA is sandwiched between 2 RuvA tetramers; dsDNA enters through RuvA and exits via RuvB. An RuvB hexamer assembles on each DNA strand where it exits the tetramer. Each RuvB hexamer is contacted by two RuvA subunits (via domain III) on 2 adjacent RuvB subunits; this complex drives branch migration. In the full resolvosome a probable DNA-RuvA(4)-RuvB(12)-RuvC(2) complex forms which resolves the HJ.

It localises to the cytoplasm. In terms of biological role, the RuvA-RuvB-RuvC complex processes Holliday junction (HJ) DNA during genetic recombination and DNA repair, while the RuvA-RuvB complex plays an important role in the rescue of blocked DNA replication forks via replication fork reversal (RFR). RuvA specifically binds to HJ cruciform DNA, conferring on it an open structure. The RuvB hexamer acts as an ATP-dependent pump, pulling dsDNA into and through the RuvAB complex. HJ branch migration allows RuvC to scan DNA until it finds its consensus sequence, where it cleaves and resolves the cruciform DNA. This Marinomonas sp. (strain MWYL1) protein is Holliday junction branch migration complex subunit RuvA.